We begin with the raw amino-acid sequence, 238 residues long: MSNSLLTQPTQESVQQIFARIAPQYDDLNTFLSFGQHHIWKAMAVKWSGVSPGDRLLDVCCGSGDLAFQGAKVVGTRGKVVGLDFCAELLAIAAGKHKSKYAHLPMQWLQGDALALPFSDNEFDGATMGYGLRNVGNIPQALTELQRVLKPGKKVAILDFHQPGNALAANFQRWYLANVVVPMAKQWRLTEEYAYLQPSLDRFPTGPKQVQFALEVGFAKAVHYPIAAGLMGVLVAEK.

The protein belongs to the class I-like SAM-binding methyltransferase superfamily. MenG/UbiE family.

It catalyses the reaction demethylphylloquinol + S-adenosyl-L-methionine = phylloquinol + S-adenosyl-L-homocysteine + H(+). Its pathway is cofactor biosynthesis; phylloquinone biosynthesis. Methyltransferase required for the conversion of 2-phytyl-1,4-beta-naphthoquinol to phylloquinol. In Synechocystis sp. (strain ATCC 27184 / PCC 6803 / Kazusa), this protein is 2-phytyl-1,4-naphtoquinone methyltransferase.